The primary structure comprises 331 residues: Ferredoxin--NADP reductase (331 aa).

Positions 20, 39, 47, 52, 92, 126, 287, and 328 each coordinate FAD.

It belongs to the ferredoxin--NADP reductase type 2 family. In terms of assembly, homodimer. FAD is required as a cofactor.

The enzyme catalyses 2 reduced [2Fe-2S]-[ferredoxin] + NADP(+) + H(+) = 2 oxidized [2Fe-2S]-[ferredoxin] + NADPH. The chain is Ferredoxin--NADP reductase from Bacillus cereus (strain ZK / E33L).